Reading from the N-terminus, the 165-residue chain is AIG2-like protein A (165 aa).

Residue 15–20 participates in substrate binding; sequence YGSFQD. Glu83 acts as the Proton acceptor in catalysis.

It belongs to the gamma-glutamylcyclotransferase family. As to expression, expressed only in seeds.

Its function is as follows. Putative gamma-glutamylcyclotransferase. The sequence is that of AIG2-like protein A from Arabidopsis thaliana (Mouse-ear cress).